The chain runs to 333 residues: Phosphate acyltransferase (333 aa).

The protein belongs to the PlsX family. In terms of assembly, homodimer. Probably interacts with PlsY.

It localises to the cytoplasm. The catalysed reaction is a fatty acyl-[ACP] + phosphate = an acyl phosphate + holo-[ACP]. The protein operates within lipid metabolism; phospholipid metabolism. Functionally, catalyzes the reversible formation of acyl-phosphate (acyl-PO(4)) from acyl-[acyl-carrier-protein] (acyl-ACP). This enzyme utilizes acyl-ACP as fatty acyl donor, but not acyl-CoA. This chain is Phosphate acyltransferase, found in Lactobacillus helveticus (strain DPC 4571).